The following is a 378-amino-acid chain: MTENKSFKESHPLDDFISDKELSNTTIQKEKLTIEQQKQVDTISKQINPLDNEGLLAFGSDLQKQMSQFSHQMLDEVQSKDVGPIGDTLSDLMSKLKSVNPNELNTDKPSMLKRIFSRAKSSINEIFSRMQSVSAQVDRITIQLQKHQTHLTRDIELLDTLYDKNKQYFDDLSLHIIAAQQKKLQLENEKLPQLQQQAQQSTNQMDIQQVSDMQQFIDRLDKRIYDLQLSRQIALQTAPQIRMIQNVNQALAEKIQSSILTSIPLWKNQMAIALTLMRQRNAVAAQRAVTDTTNDLLTANAEMLKQNAIETATENERGIVDLDTLKRTQRNIIETIEETLIIQQHGREERQLAEKELQQLEQDLKSHLVNIKGPNKQS.

This sequence belongs to the TelA family.

The sequence is that of TelA-like protein SAV1406 from Staphylococcus aureus (strain Mu50 / ATCC 700699).